The primary structure comprises 362 residues: Heat-inducible transcription repressor HrcA (362 aa).

It belongs to the HrcA family.

In terms of biological role, negative regulator of class I heat shock genes (grpE-dnaK-dnaJ and groELS operons). Prevents heat-shock induction of these operons. The protein is Heat-inducible transcription repressor HrcA of Rhizobium leguminosarum bv. trifolii (strain WSM2304).